The primary structure comprises 201 residues: FMN-dependent NADH:quinone oxidoreductase (201 aa).

FMN is bound by residues Ser-10, 16-18, 96-99, and 140-143; these read SQS, MYNF, and SRGG.

The protein belongs to the azoreductase type 1 family. In terms of assembly, homodimer. The cofactor is FMN.

The enzyme catalyses 2 a quinone + NADH + H(+) = 2 a 1,4-benzosemiquinone + NAD(+). The catalysed reaction is N,N-dimethyl-1,4-phenylenediamine + anthranilate + 2 NAD(+) = 2-(4-dimethylaminophenyl)diazenylbenzoate + 2 NADH + 2 H(+). Quinone reductase that provides resistance to thiol-specific stress caused by electrophilic quinones. In terms of biological role, also exhibits azoreductase activity. Catalyzes the reductive cleavage of the azo bond in aromatic azo compounds to the corresponding amines. The chain is FMN-dependent NADH:quinone oxidoreductase from Escherichia coli O157:H7.